Here is a 210-residue protein sequence, read N- to C-terminus: N-(5'-phosphoribosyl)anthranilate isomerase (210 aa).

This sequence belongs to the TrpF family.

The catalysed reaction is N-(5-phospho-beta-D-ribosyl)anthranilate = 1-(2-carboxyphenylamino)-1-deoxy-D-ribulose 5-phosphate. It functions in the pathway amino-acid biosynthesis; L-tryptophan biosynthesis; L-tryptophan from chorismate: step 3/5. The sequence is that of N-(5'-phosphoribosyl)anthranilate isomerase from Staphylococcus aureus (strain bovine RF122 / ET3-1).